The chain runs to 316 residues: Methionyl-tRNA formyltransferase (316 aa).

112–115 (SLLP) serves as a coordination point for (6S)-5,6,7,8-tetrahydrofolate.

It belongs to the Fmt family.

It catalyses the reaction L-methionyl-tRNA(fMet) + (6R)-10-formyltetrahydrofolate = N-formyl-L-methionyl-tRNA(fMet) + (6S)-5,6,7,8-tetrahydrofolate + H(+). In terms of biological role, attaches a formyl group to the free amino group of methionyl-tRNA(fMet). The formyl group appears to play a dual role in the initiator identity of N-formylmethionyl-tRNA by promoting its recognition by IF2 and preventing the misappropriation of this tRNA by the elongation apparatus. The sequence is that of Methionyl-tRNA formyltransferase from Actinobacillus pleuropneumoniae serotype 5b (strain L20).